Reading from the N-terminus, the 117-residue chain is uncharacterized protein (117 aa).

Residues 1–12 (MAQNSVSLSAGD) are compositionally biased toward polar residues. Disordered regions lie at residues 1–30 (MAQN…NPSA) and 43–87 (VTRL…SPYP).

This is an uncharacterized protein from Mus musculus (Mouse).